We begin with the raw amino-acid sequence, 261 residues long: Small ribosomal subunit protein eS1z (261 aa).

Residues 1-18 (MAVGKNKRISKGKKGGKK) show a composition bias toward basic residues. Residues 1–20 (MAVGKNKRISKGKKGGKKKA) form a disordered region.

This sequence belongs to the eukaryotic ribosomal protein eS1 family. As to quaternary structure, component of the small ribosomal subunit. Mature ribosomes consist of a small (40S) and a large (60S) subunit. The 40S subunit contains about 33 different proteins and 1 molecule of RNA (18S). The 60S subunit contains about 49 different proteins and 3 molecules of RNA (25S, 5.8S and 5S).

The protein resides in the cytoplasm. This Vitis vinifera (Grape) protein is Small ribosomal subunit protein eS1z.